We begin with the raw amino-acid sequence, 531 residues long: Pancreatic secretory granule membrane major glycoprotein GP2 (531 aa).

The first 21 residues, 1 to 21 (MVGCDLLWLAAASCVLTLVSP), serve as a signal peptide directing secretion. A glycan (N-linked (GlcNAc...) asparagine) is linked at asparagine 33. Residues 34–53 (SSNLDLDCGSPDSPSSGICF) are beta hairpin. Intrachain disulfides connect cysteine 41-cysteine 52, cysteine 56-cysteine 151, cysteine 79-cysteine 169, cysteine 101-cysteine 139, cysteine 107-cysteine 174, cysteine 132-cysteine 140, cysteine 184-cysteine 194, cysteine 188-cysteine 203, cysteine 205-cysteine 235, cysteine 223-cysteine 314, and cysteine 255-cysteine 278. The tract at residues 54 to 74 (DPCQNHTVLNDPTRSTENNDS) is D10C. 2 N-linked (GlcNAc...) asparagine glycosylation sites follow: asparagine 58 and asparagine 72. The region spanning 180 to 224 (APKNCEITCRPEEECVFQNNNWSCVCRQDLHVSDSQSLQPLLDCG) is the EGF-like domain. Asparagine 200 is a glycosylation site (N-linked (GlcNAc...) asparagine). A ZP-N region spans residues 222 to 315 (DCGDNEIKVK…FRVNVNFQCA (94 aa)). Residues 222-478 (DCGDNEIKVK…PSCSTNRLRS (257 aa)) enclose the ZP domain. 2 N-linked (GlcNAc...) asparagine glycosylation sites follow: asparagine 256 and asparagine 285. The tract at residues 316–339 (YPLDMSVSLETALQPIVSSLTVDV) is flexible ZP-N/ZP-C linker. The tract at residues 340 to 351 (DGAGEFNVKMAL) is internal hydrophobic patch (IHP). Residues 340 to 478 (DGAGEFNVKM…PSCSTNRLRS (139 aa)) form a ZP-C region. 3 cysteine pairs are disulfide-bonded: cysteine 395–cysteine 455, cysteine 416–cysteine 471, and cysteine 460–cysteine 467. The segment at 485-493 (YNRVLDLGP) is external hydrophobic patch (EHP).

In terms of assembly, interacts with SYCN. Interacts with bacterial adhesin fimH. In terms of processing, N-glycosylated. Specifically expressed by M (microfold) cells which are atypical epithelial cells of the intestine.

The protein localises to the zymogen granule membrane. It localises to the secreted. Its subcellular location is the cell membrane. The protein resides in the apical cell membrane. It is found in the membrane raft. The protein localises to the endosome. Functions as an intestinal M-cell transcytotic receptor specific of type-I-piliated bacteria that participates in the mucosal immune response toward these bacteria. At the apical membrane of M-cells it binds fimH, a protein of the bacteria type I pilus tip. Internalizes bound bacteria, like E.coli and S.typhimurium, from the lumen of the intestine and delivers them, through M-cells, to the underlying organized lymphoid follicles where they are captured by antigen-presenting dendritic cells to elicit a mucosal immune response. This Mus musculus (Mouse) protein is Pancreatic secretory granule membrane major glycoprotein GP2.